Consider the following 54-residue polypeptide: Ovomucoid (54 aa).

A Kazal-like domain is found at 4–54 (VDCSDYPRPDCTLEYMPLCGSDNKTYGNKCNFCNAVVDSNGTLTLSHFGKC). Cystine bridges form between Cys6/Cys36, Cys14/Cys33, and Cys22/Cys54. N-linked (GlcNAc...) asparagine glycosylation occurs at Asn43.

The protein resides in the secreted. This is Ovomucoid from Dendrocygna eytoni (Plumed whistling-duck).